Reading from the N-terminus, the 443-residue chain is Probable D-serine dehydratase (443 aa).

The residue at position 116 (Lys-116) is an N6-(pyridoxal phosphate)lysine.

The protein belongs to the serine/threonine dehydratase family. DsdA subfamily. It depends on pyridoxal 5'-phosphate as a cofactor.

The enzyme catalyses D-serine = pyruvate + NH4(+). The chain is Probable D-serine dehydratase from Bacillus cereus (strain G9842).